The following is a 294-amino-acid chain: GTPase Era (294 aa).

Residues 4–170 form the Era-type G domain; it reads KSGFVSVIGR…VEEIFTFLPE (167 aa). The segment at 12 to 19 is G1; it reads GRPNVGKS. 12–19 serves as a coordination point for GTP; it reads GRPNVGKS. Residues 38 to 42 are G2; the sequence is QTTRN. Positions 59 to 62 are G3; sequence DTPG. GTP is bound by residues 59 to 63 and 121 to 124; these read DTPGI and NKID. The tract at residues 121-124 is G4; sequence NKID. Residues 149–151 form a G5 region; the sequence is ISA. Residues 201–278 enclose the KH type-2 domain; that stretch reads TREEVPYGVA…YLDLWVKIEK (78 aa).

This sequence belongs to the TRAFAC class TrmE-Era-EngA-EngB-Septin-like GTPase superfamily. Era GTPase family. Monomer.

The protein localises to the cytoplasm. It is found in the cell inner membrane. In terms of biological role, an essential GTPase that binds both GDP and GTP, with rapid nucleotide exchange. Plays a role in 16S rRNA processing and 30S ribosomal subunit biogenesis and possibly also in cell cycle regulation and energy metabolism. The polypeptide is GTPase Era (Halothermothrix orenii (strain H 168 / OCM 544 / DSM 9562)).